Consider the following 258-residue polypeptide: Trans-aconitate 2-methyltransferase (258 aa).

Belongs to the methyltransferase superfamily. Tam family.

The protein resides in the cytoplasm. It catalyses the reaction trans-aconitate + S-adenosyl-L-methionine = (E)-3-(methoxycarbonyl)pent-2-enedioate + S-adenosyl-L-homocysteine. Functionally, catalyzes the S-adenosylmethionine monomethyl esterification of trans-aconitate. This chain is Trans-aconitate 2-methyltransferase, found in Acidovorax ebreus (strain TPSY) (Diaphorobacter sp. (strain TPSY)).